Consider the following 318-residue polypeptide: Beta-sarcoglycan (318 aa).

The segment at 1 to 32 (MAAAAAAAAEQQSSNGPVKKSMREKAVERRSV) is disordered. Residues 1–65 (MAAAAAAAAE…GLRGRKGNLA (65 aa)) are Cytoplasmic-facing. A compositionally biased stretch (basic and acidic residues) spans 21-32 (SMREKAVERRSV). Residues 66 to 86 (ICVIILLFILAVINLIITLVI) form a helical; Signal-anchor for type II membrane protein membrane-spanning segment. Residues 87 to 318 (WAVIRIGPNG…ISDNPCGNTH (232 aa)) lie on the Extracellular side of the membrane. N-linked (GlcNAc...) asparagine glycans are attached at residues asparagine 158, asparagine 211, and asparagine 258. 2 disulfides stabilise this stretch: cysteine 288-cysteine 314 and cysteine 290-cysteine 307.

The protein belongs to the sarcoglycan beta/delta/gamma/zeta family. Cross-link to form 2 major subcomplexes: one consisting of SGCB, SGCD and SGCG and the other consisting of SGCB and SGCD. The association between SGCB and SGCG is particularly strong while SGCA is loosely associated with the other sarcoglycans. In terms of processing, disulfide bonds are present. Highest expression in heart and skeletal muscle. Low expression in brain, kidney, placenta, pancreas and lung. High expression in fetal brain. Also found in fetal lung, kidney and liver.

Its subcellular location is the cell membrane. The protein resides in the sarcolemma. It localises to the cytoplasm. The protein localises to the cytoskeleton. Functionally, component of the sarcoglycan complex, a subcomplex of the dystrophin-glycoprotein complex which forms a link between the F-actin cytoskeleton and the extracellular matrix. This chain is Beta-sarcoglycan (SGCB), found in Homo sapiens (Human).